We begin with the raw amino-acid sequence, 332 residues long: Tetraacyldisaccharide 4'-kinase (332 aa).

60–67 (TVGGTGKT) serves as a coordination point for ATP.

Belongs to the LpxK family.

It carries out the reaction a lipid A disaccharide + ATP = a lipid IVA + ADP + H(+). It participates in glycolipid biosynthesis; lipid IV(A) biosynthesis; lipid IV(A) from (3R)-3-hydroxytetradecanoyl-[acyl-carrier-protein] and UDP-N-acetyl-alpha-D-glucosamine: step 6/6. Functionally, transfers the gamma-phosphate of ATP to the 4'-position of a tetraacyldisaccharide 1-phosphate intermediate (termed DS-1-P) to form tetraacyldisaccharide 1,4'-bis-phosphate (lipid IVA). The sequence is that of Tetraacyldisaccharide 4'-kinase from Pseudomonas paraeruginosa (strain DSM 24068 / PA7) (Pseudomonas aeruginosa (strain PA7)).